Here is a 205-residue protein sequence, read N- to C-terminus: Large ribosomal subunit protein uL3 (205 aa).

The protein belongs to the universal ribosomal protein uL3 family. Part of the 50S ribosomal subunit. Forms a cluster with proteins L14 and L19.

In terms of biological role, one of the primary rRNA binding proteins, it binds directly near the 3'-end of the 23S rRNA, where it nucleates assembly of the 50S subunit. In Bacteroides fragilis (strain ATCC 25285 / DSM 2151 / CCUG 4856 / JCM 11019 / LMG 10263 / NCTC 9343 / Onslow / VPI 2553 / EN-2), this protein is Large ribosomal subunit protein uL3.